The sequence spans 973 residues: Piwi-like protein 2 (973 aa).

The disordered stretch occupies residues 28 to 65; it reads WPQASKPLDPALGRGAPAGRGHVFGKPEEPSTQRGPAQ. A compositionally biased stretch (low complexity) spans 34–48; it reads PLDPALGRGAPAGRG. A Symmetric dimethylarginine modification is found at Arg47. Omega-N-methylarginine; by PRMT5; alternate is present on residues Arg76 and Arg97. Arg76 carries the symmetric dimethylarginine; by PRMT5; alternate modification. Position 97 is a symmetric dimethylarginine; alternate (Arg97). Arg102 carries the post-translational modification Symmetric dimethylarginine; by PRMT5; alternate. Arg102 carries the post-translational modification Omega-N-methylarginine; alternate. Arg146 and Arg158 each carry symmetric dimethylarginine. The segment at 162-199 is disordered; that stretch reads GISREVDKPPCTFSTPSRGPPQLSSPPALPQSPLHSPD. Arg165 carries the post-translational modification Symmetric dimethylarginine; by PRMT5. One can recognise a PAZ domain in the interval 389–502; that stretch reads CVLDVMHAIY…LLPELSFMTG (114 aa). Residue Arg551 is modified to Symmetric dimethylarginine; by PRMT5. A Piwi domain is found at 668–959; sequence MVVCIIMGPR…LAFLSGHILH (292 aa). Residues Asp745, Glu783, Asp815, and His948 contribute to the active site.

It belongs to the argonaute family. Piwi subfamily. As to quaternary structure, interacts with DDX4, MAEL, EIF3A, EIF4E, EIF4G, PRMT5 and WDR77. Associates with EIF4E- and EIF4G-containing m7G cap-binding complexes. Interacts (when methylated on arginine residues) with TDRD1 and TDRKH/TDRD2. Interacts with TDRD12. Component of the PET complex, at least composed of EXD1, PIWIL2, TDRD12 and piRNAs. Interacts with MOV10L1. Interacts with GPAT2. Interacts with TEX19. Interacts with GSK3B. Interacts (via PIWI domain) with BMAL1 and CLOCK. Interacts with TEX15. Requires Mg(2+) as cofactor. Arginine methylation by PRMT5 is required for the interaction with Tudor domain-containing protein TDRD1 and subsequent localization to the meiotic nuage, also named P granule. Expressed in adult testis and in most tumors.

The protein resides in the cytoplasm. Its function is as follows. Endoribonuclease that plays a central role during spermatogenesis by repressing transposable elements and preventing their mobilization, which is essential for the germline integrity. Plays an essential role in meiotic differentiation of spermatocytes, germ cell differentiation and in self-renewal of spermatogonial stem cells. Acts via the piRNA metabolic process, which mediates the repression of transposable elements during meiosis by forming complexes composed of piRNAs and Piwi proteins and govern the methylation and subsequent repression of transposons. During piRNA biosynthesis, plays a key role in the piRNA amplification loop, also named ping-pong amplification cycle, by acting as a 'slicer-competent' piRNA endoribonuclease that cleaves primary piRNAs, which are then loaded onto 'slicer-incompetent' PIWIL4. PIWIL2 slicing produces a pre-miRNA intermediate, which is then processed in mature piRNAs, and as well as a 16 nucleotide by-product that is degraded. Required for PIWIL4/MIWI2 nuclear localization and association with secondary piRNAs antisense. Besides their function in transposable elements repression, piRNAs are probably involved in other processes during meiosis such as translation regulation. Indirectly modulates expression of genes such as PDGFRB, SLC2A1, ITGA6, GJA7, THY1, CD9 and STRA8. When overexpressed, acts as an oncogene by inhibition of apoptosis and promotion of proliferation in tumors. Represses circadian rhythms by promoting the stability and activity of core clock components BMAL1 and CLOCK by inhibiting GSK3B-mediated phosphorylation and ubiquitination-dependent degradation of these proteins. The chain is Piwi-like protein 2 (PIWIL2) from Homo sapiens (Human).